We begin with the raw amino-acid sequence, 134 residues long: ATP synthase epsilon chain (134 aa).

This sequence belongs to the ATPase epsilon chain family. In terms of assembly, F-type ATPases have 2 components, CF(1) - the catalytic core - and CF(0) - the membrane proton channel. CF(1) has five subunits: alpha(3), beta(3), gamma(1), delta(1), epsilon(1). CF(0) has three main subunits: a, b and c.

It localises to the cell membrane. Its function is as follows. Produces ATP from ADP in the presence of a proton gradient across the membrane. This Pelotomaculum thermopropionicum (strain DSM 13744 / JCM 10971 / SI) protein is ATP synthase epsilon chain.